Consider the following 110-residue polypeptide: Ribonuclease P protein component (110 aa).

It belongs to the RnpA family. Consists of a catalytic RNA component (M1 or rnpB) and a protein subunit.

It carries out the reaction Endonucleolytic cleavage of RNA, removing 5'-extranucleotides from tRNA precursor.. Its function is as follows. RNaseP catalyzes the removal of the 5'-leader sequence from pre-tRNA to produce the mature 5'-terminus. It can also cleave other RNA substrates such as 4.5S RNA. The protein component plays an auxiliary but essential role in vivo by binding to the 5'-leader sequence and broadening the substrate specificity of the ribozyme. The polypeptide is Ribonuclease P protein component (Mesorhizobium japonicum (strain LMG 29417 / CECT 9101 / MAFF 303099) (Mesorhizobium loti (strain MAFF 303099))).